A 129-amino-acid chain; its full sequence is Small ribosomal subunit protein uS11 (129 aa).

This sequence belongs to the universal ribosomal protein uS11 family. Part of the 30S ribosomal subunit. Interacts with proteins S7 and S18. Binds to IF-3.

Functionally, located on the platform of the 30S subunit, it bridges several disparate RNA helices of the 16S rRNA. Forms part of the Shine-Dalgarno cleft in the 70S ribosome. In Maricaulis maris (strain MCS10) (Caulobacter maris), this protein is Small ribosomal subunit protein uS11.